The sequence spans 314 residues: Probable UDP-sugar transporter protein SLC35A4 (314 aa).

Over 1–20 the chain is Cytoplasmic; it reads MIAISADESPESSSPALRLR. Residues 21-41 form a helical membrane-spanning segment; it reads WLFLLLLLVLIYGSHAPLLSL. The Lumenal segment spans residues 42-54; that stretch reads CKTQAQIPFSASS. A helical transmembrane segment spans residues 55-75; sequence CVLLIETSKLFISFASLLASG. Residues 76-88 are Cytoplasmic-facing; the sequence is SVSTLRISISMTT. The helical transmembrane segment at 89–109 threads the bilayer; that stretch reads ASPYAVPAVLYAFNNHLVVFM. Over 110–145 the chain is Lumenal; sequence QAYMDPSSFQVLSNLKIASTALLYTSCLGKRLHRRQ. Residues 146 to 166 traverse the membrane as a helical segment; the sequence is WFAMGLLVSAGVSHSCFSYDL. The Cytoplasmic portion of the chain corresponds to 167 to 175; it reads EGKRETAVY. Residues 176-196 traverse the membrane as a helical segment; that stretch reads ITSWGLLLVLVYCFVSGLAAV. Residues 197–206 are Lumenal-facing; that stretch reads YTERVLKSQR. Residues 207-227 traverse the membrane as a helical segment; that stretch reads LPLSMQNLFLYTFGVVVNLAS. Residues 228-242 lie on the Cytoplasmic side of the membrane; it reads HLSGGEQKGFFEGYS. Residues 243 to 263 traverse the membrane as a helical segment; the sequence is AVVWVIVAGQVANGLLMSVVM. Residues 264 to 267 lie on the Lumenal side of the membrane; sequence KHGT. The helical transmembrane segment at 268-290 threads the bilayer; the sequence is GITRLFVISSAMLVNAVLSWGIL. At 291 to 314 the chain is on the cytoplasmic side; that stretch reads GVQLTGYFLFPVVLIGWAVYLYYT.

The protein belongs to the nucleotide-sugar transporter family. SLC35A subfamily.

The protein resides in the golgi apparatus membrane. It catalyses the reaction CDP-L-ribitol(in) + CDP(out) = CDP-L-ribitol(out) + CDP(in). Functionally, mediates the transport of CDP-ribitol. Does not exhibit CMP-sialic acid, UDP-galactose and UDP-N-acetylglucosamine transport activity. The sequence is that of Probable UDP-sugar transporter protein SLC35A4 from Danio rerio (Zebrafish).